The primary structure comprises 761 residues: MPNFCAAPNCTRKSTQSDLAFFRFPRDPARCQKWVENCRRADLEDKTPDQLNKHYRLCAKHFETSMICRTSPYRTVLRDNAIPTIFDLTSHLNNPHSRHRKRIKELSEDEIRTLKQKKIDETSEQEQKHKETNNSNAQNPSEEEGEGQDEDILPLTLEEKENKEYLKSLFEILILMGKQNIPLDGHEADEIPEGLFTPDNFQALLECRINSGEEVLRKRFETTAVNTLFCSKTQQRQMLEICESCIREETLREVRDSHFFSIITDDVVDIAGEEHLPVLVRFVDESHNLREEFIGFLPYEADAEILAVKFHTMITEKWGLNMEYCRGQAYIVSSGFSSKMKVVASRLLEKYPQAIYTLCSSCALNMWLAKSVPVMGVSVALGTIEEVCSFFHRSPQLLLELDNVISVLFQNSKERGKELKEICHSQWTGRHDAFEILVELLQALVLCLDGINSDTNIRWNNYIAGRAFVLCSAVSDFDFIVTIVVLKNVLSFTRAFGKNLQGQTSDVFFAAGSLTAVLHSLNEVMENIEVYHEFWFEEATNLATKLDIQMKLPGKFRRAHQGNLESQLTSESYYKETLSVPTVEHIIQELKDIFSEQHLKALKCLSLVPSVMGQLKFNTSEEHHADMYRSDLPNPDTLSAELHCWRIKWKHRGKDIELPSTIYEALHLPDIKFFPNVYALLKVLCILPVMKVENERYENGRKRLKAYLRNTLTDQRSSNLALLNINFDIKHDLDLMVDTYIKLYTSKSELPTDNSETVENT.

The segment at 1 to 86 (MPNFCAAPNC…LRDNAIPTIF (86 aa)) adopts a THAP-type zinc-finger fold. Over residues 116–132 (QKKIDETSEQEQKHKET) the composition is skewed to basic and acidic residues. The interval 116 to 149 (QKKIDETSEQEQKHKETNNSNAQNPSEEEGEGQD) is disordered. Phosphoserine is present on S566.

In terms of assembly, interacts with DNAJC3, probably sequestring it.

Upstream regulator of interferon-induced serine/threonine protein kinase R (PKR). May block the PKR-inhibitory function of DNAJC3, resulting in restoration of kinase activity and suppression of cell growth. This chain is 52 kDa repressor of the inhibitor of the protein kinase, found in Homo sapiens (Human).